The following is a 357-amino-acid chain: Elongation factor Ts (357 aa).

Residues 82 to 85 form an involved in Mg(2+) ion dislocation from EF-Tu region; sequence TDFV.

This sequence belongs to the EF-Ts family.

The protein resides in the cytoplasm. Associates with the EF-Tu.GDP complex and induces the exchange of GDP to GTP. It remains bound to the aminoacyl-tRNA.EF-Tu.GTP complex up to the GTP hydrolysis stage on the ribosome. This is Elongation factor Ts from Campylobacter jejuni (strain RM1221).